We begin with the raw amino-acid sequence, 55 residues long: Small ribosomal subunit protein eS31 (55 aa).

Residues C21, C24, C39, and C42 each contribute to the Zn(2+) site. The C4-type zinc-finger motif lies at C21–C42.

It belongs to the eukaryotic ribosomal protein eS31 family. As to quaternary structure, part of the 30S ribosomal subunit. Requires Zn(2+) as cofactor.

This Thermoplasma volcanium (strain ATCC 51530 / DSM 4299 / JCM 9571 / NBRC 15438 / GSS1) protein is Small ribosomal subunit protein eS31.